Reading from the N-terminus, the 250-residue chain is Ribosomal RNA small subunit methyltransferase J (250 aa).

S-adenosyl-L-methionine-binding positions include 101–102, 117–118, 153–154, and D171; these read RD, ER, and SS.

The protein belongs to the methyltransferase superfamily. RsmJ family.

It localises to the cytoplasm. The catalysed reaction is guanosine(1516) in 16S rRNA + S-adenosyl-L-methionine = N(2)-methylguanosine(1516) in 16S rRNA + S-adenosyl-L-homocysteine + H(+). Its function is as follows. Specifically methylates the guanosine in position 1516 of 16S rRNA. The polypeptide is Ribosomal RNA small subunit methyltransferase J (Cronobacter sakazakii (strain ATCC BAA-894) (Enterobacter sakazakii)).